A 103-amino-acid polypeptide reads, in one-letter code: Large ribosomal subunit protein uL24 (103 aa).

The protein belongs to the universal ribosomal protein uL24 family. Part of the 50S ribosomal subunit.

Its function is as follows. One of two assembly initiator proteins, it binds directly to the 5'-end of the 23S rRNA, where it nucleates assembly of the 50S subunit. In terms of biological role, one of the proteins that surrounds the polypeptide exit tunnel on the outside of the subunit. The protein is Large ribosomal subunit protein uL24 of Haemophilus influenzae (strain 86-028NP).